Reading from the N-terminus, the 840-residue chain is 9-beta-pimara-7,15-diene synthase, chloroplastic (840 aa).

The transit peptide at 1-56 (MASPMEAVARSSLVLAPRRRRALGLLPAAAAPFVLDCRRRHNGGMRRPHVSFACSA) directs the protein to the chloroplast. Positions 589, 593, 733, 737, and 741 each coordinate Mg(2+). The DDXXD motif signature appears at 589-593 (DDFFD).

The protein belongs to the terpene synthase family. Mg(2+) serves as cofactor.

It localises to the plastid. Its subcellular location is the chloroplast. The enzyme catalyses 9alpha-copalyl diphosphate = 9beta-pimara-7,15-diene + diphosphate. Its function is as follows. Involved in the biosynthesis of momilactone A and B phytoalexins. Catalyzes the conversion of syn-copalyl diphosphate to the phytoalexin precursor syn-pimara-7,15-diene. This chain is 9-beta-pimara-7,15-diene synthase, chloroplastic, found in Oryza sativa subsp. indica (Rice).